A 260-amino-acid polypeptide reads, in one-letter code: Dof zinc finger protein DOF1.2 (260 aa).

The Dof-type zinc-finger motif lies at 38 to 92 (PACPRCASSNTKFCYYNNYSLSQPRYFCKGCRRYWTKGGSLRNIPVGGGCRKRSR). 4 residues coordinate Zn(2+): Cys40, Cys43, Cys65, and Cys68. A disordered region spans residues 83 to 124 (VGGGCRKRSRSRQNSHKRFGRNENRPDGLINQDDGFQSSPPG). Basic residues predominate over residues 87-101 (CRKRSRSRQNSHKRF).

The protein localises to the nucleus. Functionally, transcription factor that binds specifically to a 5'-AA[AG]G-3' consensus core sequence. The protein is Dof zinc finger protein DOF1.2 (DOF1.2) of Arabidopsis thaliana (Mouse-ear cress).